The following is a 183-amino-acid chain: MSVVVGGVEYSLNNWARYEIKRRAAELESVNYYPHCEYIMPEDVVVSILGSKPNCPFLEALKRFHDFLKKQRIIFKEGYLVIPWMGAQEVADMIHHVENRINLGHLEDLAHMLKLITYHRSFDTSINQSFENLYAFKFPDANIETHELNFVRQLEKKMYGYILRLEKLQTVLTFYIEFLLKQI.

Belongs to the asfivirus S183L family.

This is an uncharacterized protein from Ornithodoros (relapsing fever ticks).